Consider the following 106-residue polypeptide: Protein translocase subunit SecE (106 aa).

The next 2 membrane-spanning stretches (helical) occupy residues 20-40 and 75-95; these read LPIR…LAAI and IVIG…SIIV.

The protein belongs to the SecE/SEC61-gamma family. As to quaternary structure, component of the Sec protein translocase complex. Heterotrimer consisting of SecY, SecE and SecG subunits. The heterotrimers can form oligomers, although 1 heterotrimer is thought to be able to translocate proteins. Interacts with the ribosome. Interacts with SecDF, and other proteins may be involved. Interacts with SecA.

Its subcellular location is the cell inner membrane. Essential subunit of the Sec protein translocation channel SecYEG. Clamps together the 2 halves of SecY. May contact the channel plug during translocation. This chain is Protein translocase subunit SecE, found in Haemophilus influenzae (strain ATCC 51907 / DSM 11121 / KW20 / Rd).